Reading from the N-terminus, the 122-residue chain is MSKKRSSPNRNVQIADQIQRDLSELIMREVKDPRIGIVTIQSVELTPDYAHAKVYFTALTGNPADTQEALNHAAGHLHNLLFKRLHIHTVPTLHFHYDQTIEKAVAMSRLIDEANATRAKDD.

It belongs to the RbfA family. Monomer. Binds 30S ribosomal subunits, but not 50S ribosomal subunits or 70S ribosomes.

It is found in the cytoplasm. One of several proteins that assist in the late maturation steps of the functional core of the 30S ribosomal subunit. Associates with free 30S ribosomal subunits (but not with 30S subunits that are part of 70S ribosomes or polysomes). Required for efficient processing of 16S rRNA. May interact with the 5'-terminal helix region of 16S rRNA. This Burkholderia thailandensis (strain ATCC 700388 / DSM 13276 / CCUG 48851 / CIP 106301 / E264) protein is Ribosome-binding factor A.